The primary structure comprises 400 residues: Multidrug resistance protein 2 (400 aa).

The next 11 helical transmembrane spans lie at 11–31 (IFII…LIIP), 46–66 (TMGY…PFAG), 78–98 (IILG…GTHV), 106–126 (ILGG…VADI), 142–162 (AIST…GFGI), 164–184 (MPFF…VFIL), 213–233 (IHPV…GLSA), 253–273 (IAAI…LLFG), 297–317 (FVST…FIFL), 346–366 (STYT…LFDL), and 368–388 (IHYP…LTMV).

The protein belongs to the major facilitator superfamily. TCR/Tet family.

It is found in the cell membrane. Its function is as follows. Energy-dependent efflux pump responsible for decreased drug accumulation in multi-drug-resistant cells. Probably uses a transmembrane proton gradient as the energy source. Causes the efflux of a variety of toxic substances, including such structurally diverse compounds as ethidium bromide, rhodamine and acridine dyes, tetraphenylphosphonium, puromycin, chloramphenicol, doxorubicin, and fluoroquinolone antibiotics. The sequence is that of Multidrug resistance protein 2 (blt) from Bacillus subtilis (strain 168).